A 550-amino-acid chain; its full sequence is Glucose-6-phosphate isomerase (550 aa).

Glu356 (proton donor) is an active-site residue. Active-site residues include His387 and Lys515.

This sequence belongs to the GPI family.

Its subcellular location is the cytoplasm. The enzyme catalyses alpha-D-glucose 6-phosphate = beta-D-fructose 6-phosphate. It functions in the pathway carbohydrate biosynthesis; gluconeogenesis. The protein operates within carbohydrate degradation; glycolysis; D-glyceraldehyde 3-phosphate and glycerone phosphate from D-glucose: step 2/4. Its function is as follows. Catalyzes the reversible isomerization of glucose-6-phosphate to fructose-6-phosphate. The chain is Glucose-6-phosphate isomerase from Photobacterium profundum (strain SS9).